The primary structure comprises 252 residues: Intraflagellar transport associated protein 2 (252 aa).

GTP-binding positions include 35-42 and 118-125; these read GPPKAGKT and WDVSGDKK.

The protein belongs to the small GTPase superfamily. Rab family. As to quaternary structure, component of the IFT complex B composed of at least che-2, che-13, dyf-1, dyf-3, dyf-6, dyf-11, dyf-13, ift-20, ift-74, ift-81, ifta-2, osm-1, osm-5 and osm-6. In terms of tissue distribution, ciliated sensory neurons.

The protein localises to the cytoplasm. The protein resides in the cytoskeleton. It is found in the cilium axoneme. Functionally, component of the intraflagellar transport (IFT) complex B required for transport of proteins in the motile cilium. May be required for ciliary entrance and transport of specific ciliary cargo proteins such as che-3 which are related to motility. Regulates specific signaling activities in the cilia, such as the daf-2/insulin receptor-like transduction pathway. This Caenorhabditis elegans protein is Intraflagellar transport associated protein 2.